Here is a 600-residue protein sequence, read N- to C-terminus: Tripeptidyl-peptidase 1 (600 aa).

An N-terminal signal peptide occupies residues 1 to 22 (MNIKFNLIIIILFILFISNVNC). The propeptide at 23–220 (KKIKNKKHLT…GGGGKVNGIG (198 aa)) is removed in mature form. 3 N-linked (GlcNAc...) asparagine glycosylation sites follow: Asn91, Asn259, and Asn266. One can recognise a Peptidase S53 domain in the interval 248-600 (YLSPDLIRKE…FDELVKYCLE (353 aa)). Residues Glu318 and Asp322 each act as charge relay system in the active site. Cys411 and Cys570 are joined by a disulfide. 2 N-linked (GlcNAc...) asparagine glycosylation sites follow: Asn475 and Asn483. Catalysis depends on Ser514, which acts as the Charge relay system. Ca(2+) is bound by residues Asp559, Ile560, Gly579, and Asp581.

As to quaternary structure, monomer. Requires Ca(2+) as cofactor. Post-translationally, activated by autocatalytic proteolytical processing upon acidification. N-glycosylation is required for processing and activity.

It localises to the secreted. The catalysed reaction is Release of an N-terminal tripeptide from a polypeptide, but also has endopeptidase activity.. Functionally, serine protease with tripeptidyl-peptidase I activity. The chain is Tripeptidyl-peptidase 1 (tpp1) from Dictyostelium discoideum (Social amoeba).